A 427-amino-acid chain; its full sequence is Gamma-glutamyl phosphate reductase (427 aa).

The protein belongs to the gamma-glutamyl phosphate reductase family.

Its subcellular location is the cytoplasm. It carries out the reaction L-glutamate 5-semialdehyde + phosphate + NADP(+) = L-glutamyl 5-phosphate + NADPH + H(+). The protein operates within amino-acid biosynthesis; L-proline biosynthesis; L-glutamate 5-semialdehyde from L-glutamate: step 2/2. Its function is as follows. Catalyzes the NADPH-dependent reduction of L-glutamate 5-phosphate into L-glutamate 5-semialdehyde and phosphate. The product spontaneously undergoes cyclization to form 1-pyrroline-5-carboxylate. The chain is Gamma-glutamyl phosphate reductase from Sinorhizobium medicae (strain WSM419) (Ensifer medicae).